Reading from the N-terminus, the 621-residue chain is tRNA uridine 5-carboxymethylaminomethyl modification enzyme MnmG (621 aa).

9-14 (GGGHAG) contributes to the FAD binding site. Position 270-284 (270-284 (GPRYCPSIEDKIVKF)) interacts with NAD(+).

It belongs to the MnmG family. In terms of assembly, homodimer. Heterotetramer of two MnmE and two MnmG subunits. FAD is required as a cofactor.

The protein localises to the cytoplasm. Functionally, NAD-binding protein involved in the addition of a carboxymethylaminomethyl (cmnm) group at the wobble position (U34) of certain tRNAs, forming tRNA-cmnm(5)s(2)U34. This is tRNA uridine 5-carboxymethylaminomethyl modification enzyme MnmG from Borreliella burgdorferi (strain ATCC 35210 / DSM 4680 / CIP 102532 / B31) (Borrelia burgdorferi).